The primary structure comprises 1001 residues: Sarcoplasmic/endoplasmic reticulum calcium ATPase 1 (1001 aa).

4 consecutive transmembrane segments (helical) span residues 49 to 69, 90 to 110, 254 to 273, and 296 to 313; these read LWEL…LLAA, EPFV…WQER, DEFG…AVWL, and FKIA…GLPA. The Ca(2+) site is built by valine 304, alanine 305, isoleucine 307, and glutamate 309. The 4-aspartylphosphate intermediate role is filled by aspartate 351. Residues aspartate 351 and threonine 353 each coordinate Mg(2+). Threonine 353 provides a ligand contact to ATP. The residue at position 441 (threonine 441) is a Phosphothreonine. Positions 442, 489, 515, and 560 each coordinate ATP. Residue threonine 569 is modified to Phosphothreonine. A Phosphoserine modification is found at serine 581. ATP is bound by residues threonine 625, glycine 626, aspartate 627, arginine 678, and lysine 684. A Mg(2+)-binding site is contributed by aspartate 703. ATP is bound at residue asparagine 706. Transmembrane regions (helical) follow at residues 758-777, 788-808, and 829-851; these read KQFI…CIFL, IPVQ…TALG, and ISGW…TVGA. The Ca(2+) site is built by asparagine 768, glutamate 771, asparagine 796, threonine 799, and aspartate 800. Residues 788–808 are interaction with PLN; it reads IPVQLLWVNLVTDGLPATALG. Cysteine 876 and cysteine 888 are joined by a disulfide. A run of 3 helical transmembrane segments spans residues 898 to 917, 931 to 949, and 965 to 985; these read TMAL…NSLS, IWLL…LILY, and TQWL…EILK. Glutamate 908 serves as a coordination point for Ca(2+). The interval 932 to 943 is interaction with PLN; it reads WLLGSICLSMSL.

This sequence belongs to the cation transport ATPase (P-type) (TC 3.A.3) family. Type IIA subfamily. As to quaternary structure, interacts with sarcolipin (SLN). Interacts with phospholamban (PLN). Interacts with myoregulin (MRLN). Interacts with DWORF. Interacts with VMP1. Requires Mg(2+) as cofactor. Skeletal muscle, fast twitch muscle (type II) fibers.

Its subcellular location is the endoplasmic reticulum membrane. It is found in the sarcoplasmic reticulum membrane. The catalysed reaction is Ca(2+)(in) + ATP + H2O = Ca(2+)(out) + ADP + phosphate + H(+). Its activity is regulated as follows. Inhibited by sarcolipin (SLN) and myoregulin (MRLN). Has also been shown to be reversibly inhibited by phospholamban (PLN) at low calcium concentrations in vitro. Dephosphorylated PLN decreases the apparent affinity of the ATPase for calcium and this inhibition is regulated by the phosphorylation of PLN in vitro. Enhanced by DWORF; DWORF increases activity by displacing sarcolipin (SLN), phospholamban (PLN) and myoregulin (MRLN). In terms of biological role, key regulator of striated muscle performance by acting as the major Ca(2+) ATPase responsible for the reuptake of cytosolic Ca(2+) into the sarcoplasmic reticulum. Catalyzes the hydrolysis of ATP coupled with the translocation of calcium from the cytosol to the sarcoplasmic reticulum lumen. Contributes to calcium sequestration involved in muscular excitation/contraction. The protein is Sarcoplasmic/endoplasmic reticulum calcium ATPase 1 of Homo sapiens (Human).